The chain runs to 293 residues: Glutamyl-Q tRNA(Asp) synthetase (293 aa).

L-glutamate-binding positions include 8–12 (RFAPS) and Glu44. Residues 11–21 (PSPSGPLHAGS) carry the 'HIGH' region motif. Zn(2+) contacts are provided by Cys98, Cys100, Tyr120, and Cys124. Residues Tyr183 and Arg201 each coordinate L-glutamate. The short motif at 239 to 243 (KLSKQ) is the 'KMSKS' region element. Lys242 is an ATP binding site.

The protein belongs to the class-I aminoacyl-tRNA synthetase family. GluQ subfamily. It depends on Zn(2+) as a cofactor.

Catalyzes the tRNA-independent activation of glutamate in presence of ATP and the subsequent transfer of glutamate onto a tRNA(Asp). Glutamate is transferred on the 2-amino-5-(4,5-dihydroxy-2-cyclopenten-1-yl) moiety of the queuosine in the wobble position of the QUC anticodon. This Janthinobacterium sp. (strain Marseille) (Minibacterium massiliensis) protein is Glutamyl-Q tRNA(Asp) synthetase.